The following is a 212-amino-acid chain: 3-isopropylmalate dehydratase small subunit (212 aa).

This sequence belongs to the LeuD family. LeuD type 1 subfamily. In terms of assembly, heterodimer of LeuC and LeuD.

The enzyme catalyses (2R,3S)-3-isopropylmalate = (2S)-2-isopropylmalate. It functions in the pathway amino-acid biosynthesis; L-leucine biosynthesis; L-leucine from 3-methyl-2-oxobutanoate: step 2/4. Catalyzes the isomerization between 2-isopropylmalate and 3-isopropylmalate, via the formation of 2-isopropylmaleate. The protein is 3-isopropylmalate dehydratase small subunit of Nitrosomonas eutropha (strain DSM 101675 / C91 / Nm57).